A 60-amino-acid polypeptide reads, in one-letter code: Large ribosomal subunit protein uL30 (60 aa).

Belongs to the universal ribosomal protein uL30 family. As to quaternary structure, part of the 50S ribosomal subunit.

This is Large ribosomal subunit protein uL30 from Streptomyces avermitilis (strain ATCC 31267 / DSM 46492 / JCM 5070 / NBRC 14893 / NCIMB 12804 / NRRL 8165 / MA-4680).